Reading from the N-terminus, the 718-residue chain is Ribosomal RNA large subunit methyltransferase K/L (718 aa).

Residues 44–155 (DAYKVCIYSY…KQFVNVFLCL (112 aa)) form the THUMP domain.

The protein belongs to the methyltransferase superfamily. RlmKL family.

Its subcellular location is the cytoplasm. It catalyses the reaction guanosine(2445) in 23S rRNA + S-adenosyl-L-methionine = N(2)-methylguanosine(2445) in 23S rRNA + S-adenosyl-L-homocysteine + H(+). It carries out the reaction guanosine(2069) in 23S rRNA + S-adenosyl-L-methionine = N(2)-methylguanosine(2069) in 23S rRNA + S-adenosyl-L-homocysteine + H(+). Its function is as follows. Specifically methylates the guanine in position 2445 (m2G2445) and the guanine in position 2069 (m7G2069) of 23S rRNA. The sequence is that of Ribosomal RNA large subunit methyltransferase K/L from Francisella tularensis subsp. novicida (strain U112).